The chain runs to 292 residues: 5,10-methylenetetrahydrofolate reductase (292 aa).

Glu-28 serves as the catalytic Proton donor/acceptor. Residue Thr-59 participates in NADH binding. FAD is bound by residues Tyr-60, Ala-62, His-88, Arg-118, Gly-119, Asp-120, Ala-132, Tyr-152, His-156, Asp-165, Asn-168, Lys-171, and Lys-172. Asp-120 contacts (6S)-5-methyl-5,6,7,8-tetrahydrofolate. NADH is bound at residue Gln-183. The (6S)-5-methyl-5,6,7,8-tetrahydrofolate site is built by Gln-183, Gln-219, and Lys-279.

Belongs to the methylenetetrahydrofolate reductase family. FAD serves as cofactor.

It catalyses the reaction (6S)-5-methyl-5,6,7,8-tetrahydrofolate + NAD(+) = (6R)-5,10-methylene-5,6,7,8-tetrahydrofolate + NADH + H(+). It participates in one-carbon metabolism; tetrahydrofolate interconversion. It functions in the pathway amino-acid biosynthesis; L-methionine biosynthesis via de novo pathway. Its function is as follows. Catalyzes the NADH-dependent reduction of 5,10-methylenetetrahydrofolate to 5-methyltetrahydrofolate. Is required to provide the methyl group necessary for methionine synthetase to convert homocysteine to methionine; the methyl group is given by 5-methyltetrahydrofolate. This chain is 5,10-methylenetetrahydrofolate reductase (metF), found in Buchnera aphidicola subsp. Schizaphis graminum (strain Sg).